Consider the following 234-residue polypeptide: Demethylmenaquinone methyltransferase (234 aa).

S-adenosyl-L-methionine is bound by residues Thr-58, Asp-79, and 104–105; that span reads NA.

Belongs to the class I-like SAM-binding methyltransferase superfamily. MenG/UbiE family.

The catalysed reaction is a 2-demethylmenaquinol + S-adenosyl-L-methionine = a menaquinol + S-adenosyl-L-homocysteine + H(+). Its pathway is quinol/quinone metabolism; menaquinone biosynthesis; menaquinol from 1,4-dihydroxy-2-naphthoate: step 2/2. In terms of biological role, methyltransferase required for the conversion of demethylmenaquinol (DMKH2) to menaquinol (MKH2). In Lysinibacillus sphaericus (strain C3-41), this protein is Demethylmenaquinone methyltransferase.